The primary structure comprises 185 residues: Class I hydrophobin SC6 (185 aa).

The N-terminal stretch at M1–A17 is a signal peptide. The segment at H70–N104 is disordered. Positions T75–S93 are enriched in low complexity. Positions K94 to N104 are enriched in polar residues. Cystine bridges form between C103–C164, C110–C158, C111–C144, and C165–C178.

The protein belongs to the fungal hydrophobin family. In terms of assembly, self-assembles to form functional amyloid fibrils called rodlets. Self-assembly into fibrillar rodlets occurs spontaneously at hydrophobic:hydrophilic interfaces and the rodlets further associate laterally to form amphipathic monolayers.

The protein localises to the secreted. It is found in the cell wall. Its function is as follows. Aerial growth, conidiation, and dispersal of filamentous fungi in the environment rely upon a capability of their secreting small amphipathic proteins called hydrophobins (HPBs) with low sequence identity. Class I can self-assemble into an outermost layer of rodlet bundles on aerial cell surfaces, conferring cellular hydrophobicity that supports fungal growth, development and dispersal; whereas Class II form highly ordered films at water-air interfaces through intermolecular interactions but contribute nothing to the rodlet structure. SC6 is a dikaryon-specific class I hydrophobin that contributes to the formation of aerial hyphae and fruiting bodies. The sequence is that of Class I hydrophobin SC6 from Schizophyllum commune (Split gill fungus).